The primary structure comprises 865 residues: High affinity cAMP-specific and IBMX-insensitive 3',5'-cyclic phosphodiesterase 8B (865 aa).

2 disordered regions span residues 17–40 (CRDS…TAPL) and 52–92 (AMPP…TCRG). Positions 23 to 36 (SNSPRQTSSVSQGP) are enriched in polar residues. The segment covering 75-90 (GSGSSTGSSGPATTTC) has biased composition (low complexity). One can recognise a PAS domain in the interval 247 to 318 (ACNSVFTALD…DTINTCIKKG (72 aa)). The segment at 373–415 (IHRDSGDNSQTEPHSFRHKSRRKESIDVKSISSRGSDAPSLQN) is disordered. Polar residues predominate over residues 402–415 (SISSRGSDAPSLQN). S497 carries the post-translational modification Phosphoserine. The PDEase domain maps to 519–855 (TINDVPPSIA…KHWKTLDDLK (337 aa)). The active-site Proton donor is the H595. Positions 599, 635, and 636 each coordinate a divalent metal cation. 2 positions are modified to phosphoserine: S731 and S734. An a divalent metal cation-binding site is contributed by D761.

This sequence belongs to the cyclic nucleotide phosphodiesterase family. PDE8 subfamily. A divalent metal cation serves as cofactor. As to expression, widely expressed.

It carries out the reaction 3',5'-cyclic AMP + H2O = AMP + H(+). It functions in the pathway purine metabolism; 3',5'-cyclic AMP degradation; AMP from 3',5'-cyclic AMP: step 1/1. Hydrolyzes the second messenger cAMP, which is a key regulator of many important physiological processes. May be involved in specific signaling in the thyroid gland. This is High affinity cAMP-specific and IBMX-insensitive 3',5'-cyclic phosphodiesterase 8B (Pde8b) from Mus musculus (Mouse).